The chain runs to 443 residues: 5-methylthioadenosine/S-adenosylhomocysteine deaminase 1 (443 aa).

2 residues coordinate Zn(2+): His69 and His71. Substrate-binding residues include Glu98 and His191. Position 218 (His218) interacts with Zn(2+). Glu221 and Asp306 together coordinate substrate. A Zn(2+)-binding site is contributed by Asp306.

The protein belongs to the metallo-dependent hydrolases superfamily. MTA/SAH deaminase family. Zn(2+) serves as cofactor.

It catalyses the reaction S-adenosyl-L-homocysteine + H2O + H(+) = S-inosyl-L-homocysteine + NH4(+). The enzyme catalyses S-methyl-5'-thioadenosine + H2O + H(+) = S-methyl-5'-thioinosine + NH4(+). In terms of biological role, catalyzes the deamination of 5-methylthioadenosine and S-adenosyl-L-homocysteine into 5-methylthioinosine and S-inosyl-L-homocysteine, respectively. Is also able to deaminate adenosine. The polypeptide is 5-methylthioadenosine/S-adenosylhomocysteine deaminase 1 (Syntrophus aciditrophicus (strain SB)).